Consider the following 203-residue polypeptide: V-type ATP synthase subunit D (203 aa).

This sequence belongs to the V-ATPase D subunit family.

Its function is as follows. Produces ATP from ADP in the presence of a proton gradient across the membrane. In Chlamydia trachomatis serovar L2 (strain ATCC VR-902B / DSM 19102 / 434/Bu), this protein is V-type ATP synthase subunit D.